Reading from the N-terminus, the 94-residue chain is MEKVRLTAFVHGHVQGVGFRWWTTSQARELKLAGSASNLSDGRVCVVAEGPQTQCEELLRRLKENPSSYRRPGHVDTVIEQWGEPRDVEGFVER.

The 90-residue stretch at 5 to 94 (RLTAFVHGHV…PRDVEGFVER (90 aa)) folds into the Acylphosphatase-like domain. Catalysis depends on residues Arg20 and Asn38.

The protein belongs to the acylphosphatase family.

The catalysed reaction is an acyl phosphate + H2O = a carboxylate + phosphate + H(+). In Corynebacterium glutamicum (strain ATCC 13032 / DSM 20300 / JCM 1318 / BCRC 11384 / CCUG 27702 / LMG 3730 / NBRC 12168 / NCIMB 10025 / NRRL B-2784 / 534), this protein is Acylphosphatase (acyP).